The sequence spans 78 residues: D-alanyl carrier protein (78 aa).

One can recognise a Carrier domain in the interval 1–78 (MEFREQVLDL…KIVEALEELR (78 aa)). Ser-36 carries the O-(pantetheine 4'-phosphoryl)serine modification.

Belongs to the DltC family. 4'-phosphopantetheine is transferred from CoA to a specific serine of apo-DCP.

It localises to the cytoplasm. The protein operates within cell wall biogenesis; lipoteichoic acid biosynthesis. Its function is as follows. Carrier protein involved in the D-alanylation of lipoteichoic acid (LTA). The loading of thioester-linked D-alanine onto DltC is catalyzed by D-alanine--D-alanyl carrier protein ligase DltA. The DltC-carried D-alanyl group is further transferred to cell membrane phosphatidylglycerol (PG) by forming an ester bond, probably catalyzed by DltD. D-alanylation of LTA plays an important role in modulating the properties of the cell wall in Gram-positive bacteria, influencing the net charge of the cell wall. This Staphylococcus epidermidis (strain ATCC 35984 / DSM 28319 / BCRC 17069 / CCUG 31568 / BM 3577 / RP62A) protein is D-alanyl carrier protein.